The following is a 130-amino-acid chain: Protachykinin-1 (130 aa).

A signal peptide spans 1–19 (MKILVAVAVFFLVSTQLSA). The propeptide occupies 20 to 56 (EEIGANDDLNYWSDWSDSDQIKEALPEPFEHILQRIA). A methionine amide mark is found at Met68 and Met107.

This sequence belongs to the tachykinin family. In terms of processing, the substance P form is cleaved at Pro-59 by the prolyl endopeptidase FAP (seprase) activity (in vitro). Substance P is also cleaved and degraded by Angiotensin-converting enzyme (ACE) and neprilysin (MME).

It is found in the secreted. Its function is as follows. Tachykinins are active peptides which excite neurons, evoke behavioral responses, are potent vasodilators and secretagogues, and contract (directly or indirectly) many smooth muscles. This chain is Protachykinin-1 (TAC1), found in Mesocricetus auratus (Golden hamster).